We begin with the raw amino-acid sequence, 336 residues long: Dihydroorotate dehydrogenase (quinone) (336 aa).

FMN is bound by residues 62–66 and T86; that span reads AGLDK. K66 contacts substrate. Residue 111-115 coordinates substrate; it reads NRMGF. Positions 139 and 172 each coordinate FMN. N172 contributes to the substrate binding site. Residue S175 is the Nucleophile of the active site. N177 is a binding site for substrate. 2 residues coordinate FMN: K217 and T245. Residue 246–247 participates in substrate binding; sequence NT. FMN is bound by residues G268, G297, and 318 to 319; that span reads YS.

This sequence belongs to the dihydroorotate dehydrogenase family. Type 2 subfamily. As to quaternary structure, monomer. It depends on FMN as a cofactor.

The protein resides in the cell membrane. The catalysed reaction is (S)-dihydroorotate + a quinone = orotate + a quinol. The protein operates within pyrimidine metabolism; UMP biosynthesis via de novo pathway; orotate from (S)-dihydroorotate (quinone route): step 1/1. Functionally, catalyzes the conversion of dihydroorotate to orotate with quinone as electron acceptor. This Edwardsiella ictaluri (strain 93-146) protein is Dihydroorotate dehydrogenase (quinone).